Reading from the N-terminus, the 30-residue chain is Varv peptide G (30 aa).

The cyclopeptide (Gly-Asn) cross-link spans 1-30; the sequence is GVPVCGETCFGGTCNTPGCSCDPWPVCSRN. Cystine bridges form between cysteine 5/cysteine 19, cysteine 9/cysteine 21, and cysteine 14/cysteine 27.

Post-translationally, this is a cyclic peptide.

Its function is as follows. Probably participates in a plant defense mechanism. The protein is Varv peptide G of Viola arvensis (European field pansy).